Reading from the N-terminus, the 364-residue chain is Transcription factor SPEECHLESS (364 aa).

The interval 35–109 is disordered; it reads GEISPTAAST…QKMSHVTVER (75 aa). Position 38 is a phosphoserine; by ASK7 (Ser38). Position 40 is a phosphothreonine; by ASK7 (Thr40). Positions 40-53 are enriched in polar residues; the sequence is TAASTPKDGTTSSK. Phosphoserine; by ASK7 is present on Ser43. Thr44 carries the post-translational modification Phosphothreonine; by ASK7. The residue at position 65 (Ser65) is a Phosphoserine; by ASK7. Positions 79–92 are enriched in acidic residues; that stretch reads EDEEEEDGDGEAEE. Residues 99-112 are basic motif; sequence QQKMSHVTVERNRR. Residues 99–150 form the bHLH domain; it reads QQKMSHVTVERNRRKQMNEHLTVLRSLMPCFYVKRGDQASIIGGVVEYISEL. Residues 113 to 150 are helix-loop-helix motif; the sequence is KQMNEHLTVLRSLMPCFYVKRGDQASIIGGVVEYISEL. Ser171 is modified (phosphoserine; by ASK7). Residues 171-227 form a disordered region; that stretch reads SPRVVPSPRPSPPVLSPRKPPLSPRINHHQIHHHLLLPPISPRTPQPTSPYRAIPPQ. Pro residues predominate over residues 175–193; sequence VPSPRPSPPVLSPRKPPLS. Residue Ser177 is modified to Phosphoserine; by ASK7, MPK3 and MPK6. A Phosphoserine; by ASK7 modification is found at Ser181. Ser186 bears the Phosphoserine; by CDKA-1, ASK7, MPK3 and MPK6 mark. Ser193 is modified (phosphoserine; by MPK3 and MPK6). Basic residues predominate over residues 196–205; the sequence is INHHQIHHHL. The span at 209–218 shows a compositional bias: pro residues; the sequence is PISPRTPQPT. Ser211 bears the Phosphoserine; by MPK3 and MPK6 mark. Thr214 bears the Phosphothreonine; by ASK7, MPK3 and MPK6 mark. Residue Ser219 is modified to Phosphoserine; by ASK7, MPK3 and MPK6.

As to quaternary structure, homodimer. Forms dimers with SCRM and SCRM2. May interact with CDKA-1. Phosphorylated by ASK7/BIN2 and ASK3/SK12; this post-translational modification inhibits activity and limit epidermal cell proliferation. Phosphorylation by MPK3 and MPK6 leads to the inhibition of stomatal fate and to degradation. Stabilized by CDKA-1-mediated phosphorylation at Ser-186 which promotes stomatal development. In terms of tissue distribution, expressed in developing leaf epidermis. Reduced accumulation in the stomatal lineage ground cells (SLGCs) where BASL is polarized in the cell cortex. Observed in small cells of non-protruding hypocotyl cell files and of developing cotyledon epidermis. Restricted to meristemoids (stomatal precursor cell) in leaves epidermis, mostly in dividing cells of non-protruding cell files.

Its subcellular location is the nucleus. Negatively regulated through phosphorylation by the MAPK module. Activity is constrained by polarized BASL in stomatal lineage ground cells (SLGCs) undergoing ACD. In terms of biological role, transcription factor acting as an integration node for stomata and brassinosteroid (BR) signaling pathways to control stomatal initiation and development. Activates transcription when in the presence of SCRM/ICE1. Functions as a dimer with SCRM or SCRM2 during stomatal initiation. Required for the initiation, the spacing and the formation of stomata, by promoting the first asymmetric cell divisions. Together with FMA and MUTE, modulates the stomata formation. Involved in the regulation of growth reduction under osmotic stress (e.g. mannitol), associated with a quick decrease of meristemoid mother cells (MMCs) number lower stomatal index and density. In Arabidopsis thaliana (Mouse-ear cress), this protein is Transcription factor SPEECHLESS.